The chain runs to 326 residues: Lipoyl synthase (326 aa).

7 residues coordinate [4Fe-4S] cluster: Cys74, Cys79, Cys85, Cys100, Cys104, Cys107, and Ser314. Positions 85 to 303 (CFGKGTATFM…EEEAYKMGFT (219 aa)) constitute a Radical SAM core domain.

Belongs to the radical SAM superfamily. Lipoyl synthase family. It depends on [4Fe-4S] cluster as a cofactor.

Its subcellular location is the cytoplasm. It catalyses the reaction [[Fe-S] cluster scaffold protein carrying a second [4Fe-4S](2+) cluster] + N(6)-octanoyl-L-lysyl-[protein] + 2 oxidized [2Fe-2S]-[ferredoxin] + 2 S-adenosyl-L-methionine + 4 H(+) = [[Fe-S] cluster scaffold protein] + N(6)-[(R)-dihydrolipoyl]-L-lysyl-[protein] + 4 Fe(3+) + 2 hydrogen sulfide + 2 5'-deoxyadenosine + 2 L-methionine + 2 reduced [2Fe-2S]-[ferredoxin]. It functions in the pathway protein modification; protein lipoylation via endogenous pathway; protein N(6)-(lipoyl)lysine from octanoyl-[acyl-carrier-protein]: step 2/2. Functionally, catalyzes the radical-mediated insertion of two sulfur atoms into the C-6 and C-8 positions of the octanoyl moiety bound to the lipoyl domains of lipoate-dependent enzymes, thereby converting the octanoylated domains into lipoylated derivatives. The chain is Lipoyl synthase from Delftia acidovorans (strain DSM 14801 / SPH-1).